A 293-amino-acid polypeptide reads, in one-letter code: Shikimate dehydrogenase (NADP(+)) (293 aa).

Residues 26-28 (SKS) and threonine 73 each bind shikimate. Lysine 77 serves as the catalytic Proton acceptor. Aspartate 89 contributes to the NADP(+) binding site. Positions 98 and 113 each coordinate shikimate. NADP(+)-binding positions include 137 to 141 (GAGGA), 161 to 166 (NRTKQR), and isoleucine 231. Residue tyrosine 233 coordinates shikimate. Residue glycine 254 participates in NADP(+) binding.

This sequence belongs to the shikimate dehydrogenase family. In terms of assembly, homodimer.

The enzyme catalyses shikimate + NADP(+) = 3-dehydroshikimate + NADPH + H(+). The protein operates within metabolic intermediate biosynthesis; chorismate biosynthesis; chorismate from D-erythrose 4-phosphate and phosphoenolpyruvate: step 4/7. In terms of biological role, involved in the biosynthesis of the chorismate, which leads to the biosynthesis of aromatic amino acids. Catalyzes the reversible NADPH linked reduction of 3-dehydroshikimate (DHSA) to yield shikimate (SA). The sequence is that of Shikimate dehydrogenase (NADP(+)) from Bartonella henselae (strain ATCC 49882 / DSM 28221 / CCUG 30454 / Houston 1) (Rochalimaea henselae).